Reading from the N-terminus, the 249-residue chain is MAPSRKFFVGGNWKMNGRKKCLGELICTLNAAKLPADTEVVCAPPTAYIDFARQKLDPKIAVAAQNCYKVTNGAFTGEISPGMIKDLGATWVVLGHSERRHIFGESDELIGQKVNHALSEGLGVIACIGEKLDEREAGITEKVVFEQTKAIADNVKDWCKVVLAYEPVWAIGTGKTATPQQAQEVHEKLRGWLKCNVSEGVAQCTRIIYGGSVTGATCKELASQPDVDGFLVGGASLKPEFVDIINAKQ.

Asn-12 and Lys-14 together coordinate substrate. At Lys-14 the chain carries N6-acetyllysine. At Tyr-68 the chain carries 3'-nitrotyrosine. Ser-80 is subject to Phosphoserine. The active-site Electrophile is His-96. Ser-106 is subject to Phosphoserine. Residue Lys-142 forms a Glycyl lysine isopeptide (Lys-Gly) (interchain with G-Cter in SUMO1) linkage. An N6-succinyllysine modification is found at Lys-149. Lys-156 is modified (N6-acetyllysine; alternate). Position 156 is an N6-succinyllysine; alternate (Lys-156). Glu-166 serves as the catalytic Proton acceptor. Thr-173 bears the Phosphothreonine mark. The residue at position 194 (Lys-194) is an N6-acetyllysine; alternate. Position 194 is an N6-succinyllysine; alternate (Lys-194). N6-methyllysine; alternate is present on Lys-194. Ser-198 bears the Phosphoserine mark. Tyr-209 is subject to 3'-nitrotyrosine. Phosphoserine is present on Ser-212. Thr-214 is modified (phosphothreonine). Ser-223 carries the phosphoserine modification. Lys-238 carries the N6-acetyllysine modification.

This sequence belongs to the triosephosphate isomerase family. In terms of assembly, homodimer.

It localises to the cytoplasm. It catalyses the reaction dihydroxyacetone phosphate = methylglyoxal + phosphate. The catalysed reaction is D-glyceraldehyde 3-phosphate = dihydroxyacetone phosphate. It functions in the pathway carbohydrate degradation; glycolysis; D-glyceraldehyde 3-phosphate from glycerone phosphate: step 1/1. Its pathway is carbohydrate biosynthesis; gluconeogenesis. Functionally, triosephosphate isomerase is an extremely efficient metabolic enzyme that catalyzes the interconversion between dihydroxyacetone phosphate (DHAP) and D-glyceraldehyde-3-phosphate (G3P) in glycolysis and gluconeogenesis. Its function is as follows. It is also responsible for the non-negligible production of methylglyoxal a reactive cytotoxic side-product that modifies and can alter proteins, DNA and lipids. This is Triosephosphate isomerase (Tpi1) from Rattus norvegicus (Rat).